We begin with the raw amino-acid sequence, 381 residues long: Selenoprotein P (381 aa).

The first 19 residues, 1-19 (MWRSLGLALALCLLPSGGT), serve as a signal peptide directing secretion. N-linked (GlcNAc...) asparagine glycosylation is present at Asn-46. Position 59 (Sec-59) is a non-standard amino acid, selenocysteine. An N-linked (GlcNAc...) (complex) asparagine glycan is attached at Asn-83. Asn-119, Asn-128, and Asn-174 each carry an N-linked (GlcNAc...) asparagine glycan. A disordered region spans residues 200–268 (TPSPHYHHEH…ENRDMPASED (69 aa)). Over residues 204-216 (HYHHEHHHNHGHQ) the composition is skewed to basic residues. Residues 218–230 (LGSSELSENQQPG) show a composition bias toward polar residues. Residues 243–255 (LHHHHKHKGQHRQ) are compositionally biased toward basic residues. At Ser-266 the chain carries Phosphoserine. Non-standard amino acids (selenocysteine) are located at Sec-300, Sec-318, and Sec-330. Residue Asn-338 is glycosylated (N-linked (GlcNAc...) asparagine). 6 non-standard amino acids (selenocysteine) are found at residues Sec-345, Sec-352, Sec-367, Sec-369, Sec-376, and Sec-378. A disordered region spans residues 355–381 (SQQLIPTEASASURUKNQAKKUEUPSN).

It belongs to the selenoprotein P family. Phosphorylation sites are present in the extracellular medium. Made in the liver and heart and secreted into the plasma. It is also found in the kidney.

The protein resides in the secreted. Functionally, might be responsible for some of the extracellular antioxidant defense properties of selenium or might be involved in the transport of selenium. May supply selenium to tissues such as brain and testis. The sequence is that of Selenoprotein P from Homo sapiens (Human).